The following is a 465-amino-acid chain: MTSMASLFSFTSPAVKRLLGWKQGDEEEKWAEKAVDALVKKLKKKKGAMEELEKALSSPGQPSKCVTIPRSLDGRLQVSHRKGLPHVIYCRVWRWPDLQSHHELKPLDICEFPFGSKQKEVCINPYHYKRVESPVLPPVLVPRHSEFNPQHSLLVQFRNLSHNEPHMPHNATFPDSFQQPNSTPFSISPNSPYPPSPASSTYPSSPASSGPSSPFQLPADTPPPAYMPPDDQMGQDNSQSMDTSNTMIPQIMPNISTRDVQPVAYEEPKHWCSIVYYELNNRVGEAFHASSTSVLVDGFTDPSNNKNRFCLGLLSNVNRNSTIENTRRHIGKGVHLYYVGGEVYAECLSDSSIFVQSRNCNYHHGFHPTTVCKIPSGCSLKIFNNQEFAQLLAQSVNHGFEAVYELTKMCTIRMSFVKGWGAEYHRQDVTSTPCWIEIHLHGPLQWLDKVLTQMGSPLNPISSVS.

The region spanning 13–137 (PAVKRLLGWK…YKRVESPVLP (125 aa)) is the MH1 domain. The Zn(2+) site is built by cysteine 65, cysteine 110, cysteine 122, and histidine 127. The interval 163–242 (NEPHMPHNAT…MGQDNSQSMD (80 aa)) is disordered. A compositionally biased stretch (polar residues) spans 173–183 (FPDSFQQPNST). The segment covering 198–214 (ASSTYPSSPASSGPSSP) has biased composition (low complexity). In terms of domain architecture, MH2 spans 271–465 (WCSIVYYELN…SPLNPISSVS (195 aa)).

It belongs to the dwarfin/SMAD family. In terms of assembly, may form trimers with the co-SMAD SMAD4.

The protein localises to the cytoplasm. Its subcellular location is the nucleus. Transcriptional modulator activated by BMP (bone morphogenetic proteins) type 1 receptor kinase. SMAD5 is a receptor-regulated SMAD (R-SMAD). This is Mothers against decapentaplegic homolog 5 (SMAD5) from Gallus gallus (Chicken).